The sequence spans 135 residues: uncharacterized protein (135 aa).

The HotDog ACOT-type domain maps to 8 to 123 (PKGIIVLKTL…IFIYVAINKT (116 aa)).

Belongs to the acyl coenzyme A hydrolase family.

This is an uncharacterized protein from Buchnera aphidicola subsp. Acyrthosiphon pisum (strain APS) (Acyrthosiphon pisum symbiotic bacterium).